Reading from the N-terminus, the 1435-residue chain is Probable ATP-dependent DNA helicase HFM1 (1435 aa).

The Helicase ATP-binding domain occupies 290–478 (DDLLYTDRNF…WLSDGERPAV (189 aa)). ATP is bound at residue 303–310 (APTGSGKT). Positions 411–414 (DEVH) match the DEAH box motif. The region spanning 519–720 (SVIQMYSDQK…DVNIAVEWIR (202 aa)) is the Helicase C-terminal domain. An SEC63 domain is found at 777-1092 (PTEAGRLMAW…GLDIQQKLTV (316 aa)). Residues 1109 to 1139 (KSETQISHSKHSDISTIAGPNKGTTASKKPG) are disordered. Residues 1143 to 1158 (CNHLCKSKHTCGHDCC) form a C4-type zinc finger. The segment at 1295 to 1315 (GFGNTLSSSTRGSKLPLQESK) is disordered. Residues 1296–1306 (FGNTLSSSTRG) are compositionally biased toward polar residues.

The protein belongs to the helicase family. SKI2 subfamily. Zn(2+) serves as cofactor. Preferentially expressed in testis and ovary.

It carries out the reaction Couples ATP hydrolysis with the unwinding of duplex DNA by translocating in the 3'-5' direction.. The enzyme catalyses ATP + H2O = ADP + phosphate + H(+). Functionally, required for crossover formation and complete synapsis of homologous chromosomes during meiosis. This is Probable ATP-dependent DNA helicase HFM1 (HFM1) from Homo sapiens (Human).